Reading from the N-terminus, the 141-residue chain is Large ribosomal subunit protein uL11B (141 aa).

This sequence belongs to the universal ribosomal protein uL11 family. As to quaternary structure, part of the ribosomal stalk of the 50S ribosomal subunit. Interacts with L10 and the large rRNA to form the base of the stalk. L10 forms an elongated spine to which L12 dimers bind in a sequential fashion forming a multimeric L10(L12)X complex. In terms of processing, one or more lysine residues are methylated.

Forms part of the ribosomal stalk which helps the ribosome interact with GTP-bound translation factors. This Halalkalibacterium halodurans (strain ATCC BAA-125 / DSM 18197 / FERM 7344 / JCM 9153 / C-125) (Bacillus halodurans) protein is Large ribosomal subunit protein uL11B.